Reading from the N-terminus, the 320-residue chain is Ferrochelatase (320 aa).

Residues H194 and E275 each contribute to the Fe cation site.

It belongs to the ferrochelatase family.

The protein resides in the cytoplasm. The enzyme catalyses heme b + 2 H(+) = protoporphyrin IX + Fe(2+). It participates in porphyrin-containing compound metabolism; protoheme biosynthesis; protoheme from protoporphyrin-IX: step 1/1. Its function is as follows. Catalyzes the ferrous insertion into protoporphyrin IX. In Cronobacter sakazakii (strain ATCC BAA-894) (Enterobacter sakazakii), this protein is Ferrochelatase.